Here is a 115-residue protein sequence, read N- to C-terminus: Migration and invasion enhancer 1 (115 aa).

Over residues 1 to 10 (MSGDTGTTSV) the composition is skewed to polar residues. The interval 1–22 (MSGDTGTTSVAPPPGETEPGHG) is disordered. Ser-2 bears the N-acetylserine mark. Cysteines 30 and 33 form a disulfide. Cys-112 carries the S-geranylgeranyl cysteine lipid modification. A propeptide spans 113-115 (VIL) (removed in mature form).

This sequence belongs to the SelWTH family. As to quaternary structure, interacts with GPX1. Post-translationally, isoprenylation facilitates association with the plasma membrane and enhances the migratory phenotype of cells by inducing increased filopodia formation.

The protein localises to the cytoplasm. The protein resides in the cytosol. Its subcellular location is the cell membrane. Increases cell migration by inducing filopodia formation at the leading edge of migrating cells. Plays a role in regulation of apoptosis, possibly through control of CASP3. May be involved in a redox-related process. The polypeptide is Migration and invasion enhancer 1 (MIEN1) (Bos taurus (Bovine)).